A 215-amino-acid chain; its full sequence is HTH-type transcriptional repressor FabR (215 aa).

The HTH tetR-type domain occupies 10–70 (KTRRSLVEAA…TMVDESGLML (61 aa)). Positions 33 to 52 (SLREVAREAGIAPTSFYRHF) form a DNA-binding region, H-T-H motif.

As to quaternary structure, homodimer.

The protein localises to the cytoplasm. Functionally, represses the transcription of fabB, involved in unsaturated fatty acid (UFA) biosynthesis. By controlling UFA production, FabR directly influences the physical properties of the membrane bilayer. In Escherichia coli O139:H28 (strain E24377A / ETEC), this protein is HTH-type transcriptional repressor FabR.